The following is a 189-amino-acid chain: MNLILFGPPAAGKGTQAKRLVEQRGFVQLSTGDMLRAARASGSELGQRVAKIMDEGGLVSDEIVIALIEEQLTVQAGAPGFIFDGFPRTIGQAEALDSLLESRESKVDLVIRMIVDDTRLLERVTKRFEEQGRADDNPATFSRRLERYYEDTAPLVPMYAERGVLVEIDGMGSIEAVSAEIDAALKQSA.

Position 10–15 (alanine 10–threonine 15) interacts with ATP. The segment at serine 30–valine 59 is NMP. AMP-binding positions include threonine 31, arginine 36, glycine 57–valine 59, glycine 85–arginine 88, and glutamine 92. The segment at lysine 126–aspartate 136 is LID. Arginine 127 is a binding site for ATP. Positions 133 and 144 each coordinate AMP. Residue glycine 172 participates in ATP binding.

Belongs to the adenylate kinase family. In terms of assembly, monomer.

The protein resides in the cytoplasm. The enzyme catalyses AMP + ATP = 2 ADP. The protein operates within purine metabolism; AMP biosynthesis via salvage pathway; AMP from ADP: step 1/1. Catalyzes the reversible transfer of the terminal phosphate group between ATP and AMP. Plays an important role in cellular energy homeostasis and in adenine nucleotide metabolism. In Hyphomonas neptunium (strain ATCC 15444), this protein is Adenylate kinase.